Consider the following 178-residue polypeptide: Peptide methionine sulfoxide reductase MsrA (178 aa).

Cys-11 is an active-site residue.

It belongs to the MsrA Met sulfoxide reductase family.

It carries out the reaction L-methionyl-[protein] + [thioredoxin]-disulfide + H2O = L-methionyl-(S)-S-oxide-[protein] + [thioredoxin]-dithiol. The catalysed reaction is [thioredoxin]-disulfide + L-methionine + H2O = L-methionine (S)-S-oxide + [thioredoxin]-dithiol. Has an important function as a repair enzyme for proteins that have been inactivated by oxidation. Catalyzes the reversible oxidation-reduction of methionine sulfoxide in proteins to methionine. The sequence is that of Peptide methionine sulfoxide reductase MsrA from Natronomonas pharaonis (strain ATCC 35678 / DSM 2160 / CIP 103997 / JCM 8858 / NBRC 14720 / NCIMB 2260 / Gabara) (Halobacterium pharaonis).